A 222-amino-acid polypeptide reads, in one-letter code: GMP/IMP nucleotidase YrfG (222 aa).

Asp9 (nucleophile) is an active-site residue. Mg(2+) contacts are provided by Asp9 and Asp11. Substrate-binding positions include 9–11 (DVD) and Lys149. Asp174 serves as a coordination point for Mg(2+).

This sequence belongs to the HAD-like hydrolase superfamily. Requires Mg(2+) as cofactor. Mn(2+) is required as a cofactor. The cofactor is Co(2+). It depends on Zn(2+) as a cofactor.

It catalyses the reaction a ribonucleoside 5'-phosphate + H2O = a ribonucleoside + phosphate. Its function is as follows. Catalyzes the dephosphorylation of different purine nucleotides (GMP and IMP). Also hydrolyzes flavin mononucleotide (FMN). The protein is GMP/IMP nucleotidase YrfG (yrfG) of Escherichia coli (strain K12).